Here is a 1041-residue protein sequence, read N- to C-terminus: RAS protein activator like-3 (1041 aa).

The tract at residues 1–59 (MKPECGQTMFRTFWSRSRDSSAMDPPLQSEEDSQTQPSLPSPLTSYRWHTGGSGEKAAG) is disordered. Positions 34–44 (QTQPSLPSPLT) are enriched in polar residues. A phosphoserine mark is found at serine 41, serine 74, serine 187, serine 189, serine 190, serine 193, serine 239, serine 252, serine 256, and serine 259. The stretch at 218-243 (SNQVHNVRKLLKRLKEKKRAKSELGA) forms a coiled coil. In terms of domain architecture, PH spans 220–321 (QVHNVRKLLK…WIEDLRRQFQ (102 aa)). The disordered stretch occupies residues 234–256 (KKRAKSELGAYTPRDGPPSALGS). A Phosphothreonine modification is found at threonine 262. The region spanning 312–430 (WIEDLRRQFQ…APAAGLERWF (119 aa)) is the C2 domain. The Ras-GAP domain occupies 500–708 (GRAQALVTDL…PAMQHFLDQV (209 aa)). The tract at residues 790-910 (GEKPGFLAPR…PGDRYQTTGT (121 aa)) is disordered. 2 positions are modified to phosphoserine: serine 813 and serine 816. The segment covering 850 to 866 (RPTHRRPSAGSKPRPKG) has biased composition (basic residues). Residues 931-1013 (QKALSLLVES…LRDSLQSLQL (83 aa)) adopt a coiled-coil conformation. The disordered stretch occupies residues 1016-1041 (KTPGSRSQPLPLKAPCVNGADLSMGT).

As to expression, predominantly expressed in hematopoietic tissues.

Its subcellular location is the cytoplasm. The protein localises to the cell cortex. Functionally, functions as a Ras GTPase-activating protein. Plays an important role in the expansion and functions of natural killer T (NKT) cells in the liver by negatively regulating RAS activity and the down-stream ERK signaling pathway. This chain is RAS protein activator like-3 (Rasal3), found in Mus musculus (Mouse).